We begin with the raw amino-acid sequence, 233 residues long: Large ribosomal subunit protein uL1 (233 aa).

This sequence belongs to the universal ribosomal protein uL1 family. As to quaternary structure, part of the 50S ribosomal subunit.

Binds directly to 23S rRNA. The L1 stalk is quite mobile in the ribosome, and is involved in E site tRNA release. Its function is as follows. Protein L1 is also a translational repressor protein, it controls the translation of the L11 operon by binding to its mRNA. The chain is Large ribosomal subunit protein uL1 from Rhizobium etli (strain CIAT 652).